Consider the following 943-residue polypeptide: Conidiophore development regulator abaA (943 aa).

2 disordered regions span residues 1 to 69 and 111 to 133; these read MSSS…FNGG and TSRQ…HQRG. Residues 29-43 are compositionally biased toward basic and acidic residues; that stretch reads IDTRRSFHGDSRLPL. The segment covering 59 to 68 has biased composition (polar residues); that stretch reads PSSAHSSFNG. Positions 161–254 form a DNA-binding region, TEA; the sequence is QKDKGGVWRR…QVVKKFFEDL (94 aa). Residues 537 to 555 are compositionally biased toward basic and acidic residues; the sequence is EHQRKKEKRSCGKKPDLER. 2 disordered regions span residues 537–575 and 809–901; these read EHQR…AAWT and GAAG…HHPG. The segment covering 865–889 has biased composition (low complexity); the sequence is DSWTAGSSAGGAPAATPTGPDWGPT.

Belongs to the TEC1 family.

Its subcellular location is the nucleus. In terms of biological role, brlA, abaA and wetA are pivotal regulators of conidiophore development and conidium maturation. They act individually and together to regulate their own expression and that of numerous other sporulation-specific genes. Binds to the sequence 5'-CATTCY-3', where Y is a pyrimidine, making both major- and minor-groove contacts. This Hapsidospora chrysogena (Acremonium chrysogenum) protein is Conidiophore development regulator abaA.